The sequence spans 601 residues: Elongation factor 4 (601 aa).

A tr-type G domain is found at 5-187 (SNIRNFSIIA…AIVERLPAPE (183 aa)). GTP is bound by residues 17–22 (DHGKST) and 134–137 (NKID).

This sequence belongs to the TRAFAC class translation factor GTPase superfamily. Classic translation factor GTPase family. LepA subfamily.

The protein localises to the cell inner membrane. The catalysed reaction is GTP + H2O = GDP + phosphate + H(+). In terms of biological role, required for accurate and efficient protein synthesis under certain stress conditions. May act as a fidelity factor of the translation reaction, by catalyzing a one-codon backward translocation of tRNAs on improperly translocated ribosomes. Back-translocation proceeds from a post-translocation (POST) complex to a pre-translocation (PRE) complex, thus giving elongation factor G a second chance to translocate the tRNAs correctly. Binds to ribosomes in a GTP-dependent manner. This is Elongation factor 4 from Oleidesulfovibrio alaskensis (strain ATCC BAA-1058 / DSM 17464 / G20) (Desulfovibrio alaskensis).